The following is a 140-amino-acid chain: Large ribosomal subunit protein uL14 (140 aa).

Belongs to the universal ribosomal protein uL14 family. As to quaternary structure, part of the 50S ribosomal subunit. Forms a cluster with proteins L3 and L24e, part of which may contact the 16S rRNA in 2 intersubunit bridges.

In terms of biological role, binds to 23S rRNA. Forms part of two intersubunit bridges in the 70S ribosome. This chain is Large ribosomal subunit protein uL14, found in Aeropyrum pernix (strain ATCC 700893 / DSM 11879 / JCM 9820 / NBRC 100138 / K1).